The sequence spans 892 residues: Alpha-actinin-1 (892 aa).

Met-1 is subject to N-acetylmethionine. The tract at residues 1–247 is actin-binding; it reads MDHYDSQQTN…IMTYVSSFYH (247 aa). Position 6 is a phosphoserine (Ser-6). Residue Tyr-12 is modified to Phosphotyrosine; by FAK1. Calponin-homology (CH) domains are found at residues 31 to 135 and 144 to 250; these read KQQR…LRFA and TSAK…HAFS. N6-acetyllysine is present on residues Lys-95 and Lys-195. Spectrin repeat units follow at residues 274-384, 394-499, 509-620, and 630-733; these read QLME…WLLN, HLAE…ALER, QLYL…ALTE, and RLRK…EVEN. The tract at residues 274–733 is interaction with DDN; sequence QLMEDYEKLA…IARTINEVEN (460 aa). Ser-471 bears the Phosphoserine mark. At Lys-676 the chain carries N6-acetyllysine. Ser-677 is subject to Phosphoserine. EF-hand domains are found at residues 746–781 and 787–822; these read EQMN…LGYD and QGEA…ETAD. 5 residues coordinate Ca(2+): Asp-759, Asp-761, Ser-763, Thr-765, and Glu-770. Ser-890 carries the post-translational modification Phosphoserine.

This sequence belongs to the alpha-actinin family. In terms of assembly, homodimer; antiparallel. Interacts with MYOZ2, TTID and LPP. Interacts with DDN. Interacts with PSD. Interacts with MICALL2. Interacts with DNM2 and CTTN. Interacts with PDLIM1. Interacts with PDLIM2. Interacts with PDLIM4 (via PDZ domain). Interacts with IGSF8.

Its subcellular location is the cytoplasm. It is found in the cytoskeleton. The protein localises to the myofibril. The protein resides in the sarcomere. It localises to the z line. Its subcellular location is the cell membrane. It is found in the cell junction. The protein localises to the cell projection. The protein resides in the ruffle. F-actin cross-linking protein which is thought to anchor actin to a variety of intracellular structures. Association with IGSF8 regulates the immune synapse formation and is required for efficient T-cell activation. The polypeptide is Alpha-actinin-1 (ACTN1) (Macaca fascicularis (Crab-eating macaque)).